A 180-amino-acid polypeptide reads, in one-letter code: Cytokinin-beta-glucosidase 2 (180 aa).

In terms of biological role, hydrolyzes cytokinin glucosides thus liberating free cytokinins. The polypeptide is Cytokinin-beta-glucosidase 2 (ROLC2) (Panax ginseng (Korean ginseng)).